A 194-amino-acid polypeptide reads, in one-letter code: Glycerol-3-phosphate acyltransferase (194 aa).

5 helical membrane-spanning segments follow: residues 4–24 (ELIL…LLLA), 80–100 (WVAA…FLGF), 112–132 (VFLG…IGIV), 137–157 (YISL…AAVE), and 161–181 (LLVG…RENI).

This sequence belongs to the PlsY family. Probably interacts with PlsX.

It is found in the cell inner membrane. It catalyses the reaction an acyl phosphate + sn-glycerol 3-phosphate = a 1-acyl-sn-glycero-3-phosphate + phosphate. The protein operates within lipid metabolism; phospholipid metabolism. Catalyzes the transfer of an acyl group from acyl-phosphate (acyl-PO(4)) to glycerol-3-phosphate (G3P) to form lysophosphatidic acid (LPA). This enzyme utilizes acyl-phosphate as fatty acyl donor, but not acyl-CoA or acyl-ACP. The protein is Glycerol-3-phosphate acyltransferase of Geobacter sulfurreducens (strain ATCC 51573 / DSM 12127 / PCA).